The following is a 214-amino-acid chain: Probable nicotinate-nucleotide adenylyltransferase (214 aa).

Belongs to the NadD family.

It catalyses the reaction nicotinate beta-D-ribonucleotide + ATP + H(+) = deamido-NAD(+) + diphosphate. The protein operates within cofactor biosynthesis; NAD(+) biosynthesis; deamido-NAD(+) from nicotinate D-ribonucleotide: step 1/1. Catalyzes the reversible adenylation of nicotinate mononucleotide (NaMN) to nicotinic acid adenine dinucleotide (NaAD). This Rhodopirellula baltica (strain DSM 10527 / NCIMB 13988 / SH1) protein is Probable nicotinate-nucleotide adenylyltransferase.